The following is a 548-amino-acid chain: Cleavage and polyadenylation specificity factor subunit 6 (548 aa).

The 81-residue stretch at 81 to 161 (IALYIGNLTW…QKPIVTPCNK (81 aa)) folds into the RRM domain. Polar residues predominate over residues 169 to 180 (MQSRKTATQAGQ). 2 disordered regions span residues 169–401 (MQSR…MDVV) and 473–548 (LHGI…YRHR). Composition is skewed to pro residues over residues 221–279 (PAGP…PPVM), 294–362 (PPGP…PPPG), and 373–384 (GPPPSDPYGRPP). 2 stretches are compositionally biased toward basic and acidic residues: residues 385–400 (PYERGDYGPPGRDMDV) and 490–500 (RSRERDHSRSR). Positions 501–511 (EKSRRHKSRSR) are enriched in basic residues. The segment covering 512 to 548 (DRHDDYYRERSRERERHRDRERDRDRERDREREYRHR) has biased composition (basic and acidic residues).

Belongs to the RRM CPSF6/7 family. As to quaternary structure, component of the cleavage factor Im (CFIm) complex.

The protein localises to the nucleus. It is found in the nucleoplasm. The protein resides in the nucleus speckle. It localises to the cytoplasm. Functionally, component of the cleavage factor Im (CFIm) complex that functions as an activator of the pre-mRNA 3'-end cleavage and polyadenylation processing required for the maturation of pre-mRNA into functional mRNAs. CFIm contributes to the recruitment of multiprotein complexes on specific sequences on the pre-mRNA 3'-end, so called cleavage and polyadenylation signals (pA signals). Most pre-mRNAs contain multiple pA signals, resulting in alternative cleavage and polyadenylation (APA) producing mRNAs with variable 3'-end formation. The CFIm complex acts as a key regulator of cleavage and polyadenylation site choice during APA through its binding to 5'-UGUA-3' elements localized in the 3'-untranslated region (UTR) for a huge number of pre-mRNAs. Plays a role in mRNA export. The sequence is that of Cleavage and polyadenylation specificity factor subunit 6 from Xenopus laevis (African clawed frog).